The primary structure comprises 715 residues: Methionine--tRNA ligase (715 aa).

The 'HIGH' region signature appears at 20–30 (PYANGKAHIGH). Zn(2+)-binding residues include Cys-151, Cys-154, Cys-163, and Cys-167. The short motif at 334-338 (KFSKT) is the 'KMSKS' region element. Lys-337 is an ATP binding site. The tract at residues 559-593 (ANAKRNGVKGGEKEPSKSEGMGPSEASKASEKTVD) is disordered. Residues 613–715 (DFAKLDIRVG…KEIKSGSRIR (103 aa)) enclose the tRNA-binding domain.

It belongs to the class-I aminoacyl-tRNA synthetase family. MetG type 1 subfamily. As to quaternary structure, homodimer. Zn(2+) is required as a cofactor.

The protein resides in the cytoplasm. It carries out the reaction tRNA(Met) + L-methionine + ATP = L-methionyl-tRNA(Met) + AMP + diphosphate. Functionally, is required not only for elongation of protein synthesis but also for the initiation of all mRNA translation through initiator tRNA(fMet) aminoacylation. This Methanosarcina mazei (strain ATCC BAA-159 / DSM 3647 / Goe1 / Go1 / JCM 11833 / OCM 88) (Methanosarcina frisia) protein is Methionine--tRNA ligase.